The primary structure comprises 316 residues: MTLIAIFLAVLLDWLIGDPYSWPHPVKWMGSYIYLCMRLQEKKQFSPYLFGFFLWLTTVGLALGVSCGLLWLAGLAHPVLYWLVWIYLAYASLAAKSLAFEAQKVYHTLKFGTLEEARKQVGMIVGRETSQLTPEEISKATIETVAENTSDGVIGPLLCLFLGGPILAMTYKAINTLDSMVGYKTEKYRKIGLISAKMDDLANLIPARLTWLFLILSSQILLLDVKGALRIGWRDRYQHASPNSAFSEAVVAGALGIQLGGPHVYHGELIEKPTIGEDSRPVEADDIQTAISLLYTSTMTGLILFTLFYLVMQAYF.

5 helical membrane-spanning segments follow: residues 45-65, 78-100, 151-171, 209-229, and 291-311; these read FSPYLFGFFLWLTTVGLALGV, PVLYWLVWIYLAYASLAAKSLAF, DGVIGPLLCLFLGGPILAMTY, LTWLFLILSSQILLLDVKGAL, and ISLLYTSTMTGLILFTLFYLV.

This sequence belongs to the CobD/CbiB family.

It localises to the cell membrane. The protein operates within cofactor biosynthesis; adenosylcobalamin biosynthesis. In terms of biological role, converts cobyric acid to cobinamide by the addition of aminopropanol on the F carboxylic group. The protein is Cobalamin biosynthesis protein CobD of Streptococcus sanguinis (strain SK36).